The following is a 449-amino-acid chain: Cyclin-B1-1 (449 aa).

2 disordered regions span residues 1 to 34 (MATR…VAGR) and 90 to 143 (AVAP…SVRK). 2 stretches are compositionally biased toward low complexity: residues 90-102 (AVAP…PAQR) and 121-134 (EISS…RQQS).

This sequence belongs to the cyclin family. Cyclin AB subfamily.

The sequence is that of Cyclin-B1-1 (CYCB1-1) from Oryza sativa subsp. japonica (Rice).